The chain runs to 55 residues: Large ribosomal subunit protein bL33B (55 aa).

This sequence belongs to the bacterial ribosomal protein bL33 family.

This chain is Large ribosomal subunit protein bL33B, found in Mycolicibacterium paratuberculosis (strain ATCC BAA-968 / K-10) (Mycobacterium paratuberculosis).